We begin with the raw amino-acid sequence, 60 residues long: Large ribosomal subunit protein uL30 (60 aa).

This sequence belongs to the universal ribosomal protein uL30 family. Part of the 50S ribosomal subunit.

This Verminephrobacter eiseniae (strain EF01-2) protein is Large ribosomal subunit protein uL30.